A 197-amino-acid polypeptide reads, in one-letter code: Nucleoside triphosphate pyrophosphatase (197 aa).

The Proton acceptor role is filled by Asp74.

Belongs to the Maf family. A divalent metal cation is required as a cofactor.

Its subcellular location is the cytoplasm. It catalyses the reaction a ribonucleoside 5'-triphosphate + H2O = a ribonucleoside 5'-phosphate + diphosphate + H(+). The enzyme catalyses a 2'-deoxyribonucleoside 5'-triphosphate + H2O = a 2'-deoxyribonucleoside 5'-phosphate + diphosphate + H(+). Nucleoside triphosphate pyrophosphatase. May have a dual role in cell division arrest and in preventing the incorporation of modified nucleotides into cellular nucleic acids. The protein is Nucleoside triphosphate pyrophosphatase of Granulibacter bethesdensis (strain ATCC BAA-1260 / CGDNIH1).